Here is a 458-residue protein sequence, read N- to C-terminus: Phosphoglucosamine mutase (458 aa).

Catalysis depends on S106, which acts as the Phosphoserine intermediate. Residues S106, D247, D249, and D251 each contribute to the Mg(2+) site. S106 is subject to Phosphoserine.

The protein belongs to the phosphohexose mutase family. Requires Mg(2+) as cofactor. In terms of processing, activated by phosphorylation.

The catalysed reaction is alpha-D-glucosamine 1-phosphate = D-glucosamine 6-phosphate. Functionally, catalyzes the conversion of glucosamine-6-phosphate to glucosamine-1-phosphate. The protein is Phosphoglucosamine mutase of Chlamydia abortus (strain DSM 27085 / S26/3) (Chlamydophila abortus).